The following is a 466-amino-acid chain: Polycomb group protein FIE1 (466 aa).

A compositionally biased stretch (basic residues) spans methionine 1–serine 10. A disordered region spans residues methionine 1–leucine 71. Residues serine 31 to serine 49 show a composition bias toward low complexity. WD repeat units follow at residues aspartate 167–serine 209, glycine 212–valine 252, glycine 258–glutamate 298, isoleucine 324–glycine 361, proline 374–isoleucine 414, and glutamine 421–valine 460.

Belongs to the WD repeat ESC family. In terms of assembly, interacts with EZ1 and CLF. Component of the polycomb repressive complex 2 (PRC2), which methylates 'Lys-27' residues of histone H3 (H3K27me3), leading to transcriptional repression of the affected target gene. Expressed specifically in seed endosperm.

Functionally, polycomb group (PcG) protein. PcG proteins act by forming multiprotein complexes, which are required to maintain the transcriptionally repressive state of homeotic genes throughout development. PcG proteins are not required to initiate repression, but to maintain it during later stages of development. They act via the methylation of histones, rendering chromatin heritably changed in its expressibility. Together with EZ1 and CLF forms a complex that is involved in gene transcriptional repression by trimethylation on histone H3 'Lys-27' (H3K27me3) of target genes. Involved in the regulation of embryo and seed endosperm development. FIE1-containing PcG complex in seed endosperm regulates the expression of various transcription factors by trimethylation on histone H3 'Lys-27' (H3K27me3) of target genes. Involved in the overall expression regulation of nutrient metabolism genes, such as prolamin synthesis and seed storage protein synthesis genes. Can regulate valine, leucine and isoleucine metabolism-related genes. This Oryza sativa subsp. japonica (Rice) protein is Polycomb group protein FIE1.